We begin with the raw amino-acid sequence, 280 residues long: Shikimate dehydrogenase (NADP(+)) (280 aa).

Residues 18 to 20 (SRS) and Thr65 contribute to the shikimate site. Lys69 (proton acceptor) is an active-site residue. Shikimate contacts are provided by Asn90 and Asp105. NADP(+) contacts are provided by residues 130–134 (GAGGA), 154–159 (NRTLAR), and Leu219. Tyr221 is a shikimate binding site. Gly242 is a binding site for NADP(+).

It belongs to the shikimate dehydrogenase family. Homodimer.

The catalysed reaction is shikimate + NADP(+) = 3-dehydroshikimate + NADPH + H(+). Its pathway is metabolic intermediate biosynthesis; chorismate biosynthesis; chorismate from D-erythrose 4-phosphate and phosphoenolpyruvate: step 4/7. Functionally, involved in the biosynthesis of the chorismate, which leads to the biosynthesis of aromatic amino acids. Catalyzes the reversible NADPH linked reduction of 3-dehydroshikimate (DHSA) to yield shikimate (SA). The polypeptide is Shikimate dehydrogenase (NADP(+)) (Mesorhizobium japonicum (strain LMG 29417 / CECT 9101 / MAFF 303099) (Mesorhizobium loti (strain MAFF 303099))).